The following is a 423-amino-acid chain: Glycine amidinotransferase, mitochondrial (423 aa).

Residues 1 to 48 (MLRVRCLRGGSRGAEAVHYIGSRLGRTLTGWVQRTFQSTQAATASSRN) constitute a mitochondrion transit peptide. The span at 39 to 51 (TQAATASSRNSSA) shows a compositional bias: low complexity. Residues 39-65 (TQAATASSRNSSAADDKATEPLPKDCP) are disordered. A phosphoserine mark is found at Ser46 and Ser49. Residues 52–61 (ADDKATEPLP) are compositionally biased toward basic and acidic residues. Asp170 lines the arginine pocket. Residues Asp254 and His303 contribute to the active site. Positions 305, 322, 354, and 355 each coordinate arginine. Lys385 bears the N6-acetyllysine mark. Cys407 functions as the Amidino-cysteine intermediate in the catalytic mechanism.

The protein belongs to the amidinotransferase family. Homodimer.

Its subcellular location is the mitochondrion inner membrane. It catalyses the reaction L-arginine + glycine = guanidinoacetate + L-ornithine. It carries out the reaction 4-aminobutanoate + L-arginine = 4-guanidinobutanoate + L-ornithine. The catalysed reaction is beta-alanine + L-arginine = 3-guanidinopropanoate + L-ornithine. The enzyme catalyses taurine + L-arginine = taurocyamine + L-ornithine. Its pathway is amine and polyamine biosynthesis; creatine biosynthesis; creatine from L-arginine and glycine: step 1/2. In terms of biological role, transamidinase that catalyzes the transfer of the amidino group of L-arginine onto the amino moiety of acceptor metabolites such as glycine, beta-alanine, gamma-aminobutyric acid (GABA) and taurine yielding the corresponding guanidine derivatives. Catalyzes the rate-limiting step of creatine biosynthesis, namely the transfer of the amidino group from L-arginine to glycine to generate guanidinoacetate, which is then methylated by GAMT to form creatine. Provides creatine as a source for ATP generation in tissues with high energy demands, in particular skeletal muscle, heart and brain. This Pongo abelii (Sumatran orangutan) protein is Glycine amidinotransferase, mitochondrial (GATM).